The chain runs to 647 residues: Zinc finger protein 567 (647 aa).

The KRAB domain maps to 32-77; it reads MDVMLENYCHLISVGCHMTKPDVILKLERGEEPWTSFKGHTCLEEN. Residues Lys-173, Lys-202, and Lys-217 each participate in a glycyl lysine isopeptide (Lys-Gly) (interchain with G-Cter in SUMO2) cross-link. The C2H2-type 1; degenerate zinc finger occupies 210 to 232; it reads FEYNDCEKAFLKRGGPVTHSRTY. 7 C2H2-type zinc fingers span residues 253–275, 281–303, 309–331, 337–359, 365–387, 393–415, and 421–443; these read HTCT…QGIH, YQCH…QRTH, FVCN…QRTH, YECP…QRTH, YECS…QRIH, YICK…QRTH, and YICN…EKTH. Lys-447 participates in a covalent cross-link: Glycyl lysine isopeptide (Lys-Gly) (interchain with G-Cter in SUMO2). 7 consecutive C2H2-type zinc fingers follow at residues 449 to 471, 477 to 499, 505 to 527, 533 to 555, 561 to 583, 589 to 611, and 617 to 639; these read YICN…QRTH, YECP…HRTH, YECN…QRIH, YICN…QKIH, YECP…QRTH, and YKCS…QRTH.

Belongs to the krueppel C2H2-type zinc-finger protein family.

It is found in the nucleus. Functionally, may be involved in transcriptional regulation. The polypeptide is Zinc finger protein 567 (ZNF567) (Bos taurus (Bovine)).